Reading from the N-terminus, the 203-residue chain is Protein GrpE (203 aa).

Positions methionine 1 to asparagine 20 are enriched in polar residues. A disordered region spans residues methionine 1–lysine 46.

It belongs to the GrpE family. Homodimer.

The protein resides in the cytoplasm. Functionally, participates actively in the response to hyperosmotic and heat shock by preventing the aggregation of stress-denatured proteins, in association with DnaK and GrpE. It is the nucleotide exchange factor for DnaK and may function as a thermosensor. Unfolded proteins bind initially to DnaJ; upon interaction with the DnaJ-bound protein, DnaK hydrolyzes its bound ATP, resulting in the formation of a stable complex. GrpE releases ADP from DnaK; ATP binding to DnaK triggers the release of the substrate protein, thus completing the reaction cycle. Several rounds of ATP-dependent interactions between DnaJ, DnaK and GrpE are required for fully efficient folding. The polypeptide is Protein GrpE (Ehrlichia chaffeensis (strain ATCC CRL-10679 / Arkansas)).